We begin with the raw amino-acid sequence, 252 residues long: Imidazole glycerol phosphate synthase subunit HisF (252 aa).

Residues D11 and D130 contribute to the active site.

It belongs to the HisA/HisF family. Heterodimer of HisH and HisF.

Its subcellular location is the cytoplasm. It carries out the reaction 5-[(5-phospho-1-deoxy-D-ribulos-1-ylimino)methylamino]-1-(5-phospho-beta-D-ribosyl)imidazole-4-carboxamide + L-glutamine = D-erythro-1-(imidazol-4-yl)glycerol 3-phosphate + 5-amino-1-(5-phospho-beta-D-ribosyl)imidazole-4-carboxamide + L-glutamate + H(+). It functions in the pathway amino-acid biosynthesis; L-histidine biosynthesis; L-histidine from 5-phospho-alpha-D-ribose 1-diphosphate: step 5/9. IGPS catalyzes the conversion of PRFAR and glutamine to IGP, AICAR and glutamate. The HisF subunit catalyzes the cyclization activity that produces IGP and AICAR from PRFAR using the ammonia provided by the HisH subunit. In Acinetobacter baylyi (strain ATCC 33305 / BD413 / ADP1), this protein is Imidazole glycerol phosphate synthase subunit HisF.